A 112-amino-acid polypeptide reads, in one-letter code: cAMP-regulated phosphoprotein 19 (112 aa).

An N-acetylmethionine modification is found at Met1. Positions 1–11 are enriched in low complexity; sequence MSAEVPEAASA. A disordered region spans residues 1 to 49; the sequence is MSAEVPEAASAEEQKEMEDKVTSPEKAEEAKLKARYPHLGQKPGGSDFL. The residue at position 2 (Ser2) is an N-acetylserine. Residues Ser2 and Ser23 each carry the phosphoserine modification. Residues 12-32 show a composition bias toward basic and acidic residues; it reads EEQKEMEDKVTSPEKAEEAKL. Phosphoserine; by GWL is present on residues Ser62 and Ser104. The interval 73 to 112 is disordered; the sequence is KNKQLPTAAPDKTEVTGDHIPTPQDLPQRKPSLVASKLAG. Phosphoserine; by PKA is present on Ser104. The residue at position 109 (Lys109) is an N6-acetyllysine.

It belongs to the endosulfine family. Interacts (when phosphorylated at Ser-62) with PPP2R2D. Interacts with SNCA. Interacts with PPP2R2A; the interaction is direct and this interaction inhibits PP2A activity. Post-translationally, phosphorylation at Ser-62 by MASTL/GWL during mitosis is essential for interaction with PPP2R2D (PR55-delta) and subsequent inactivation of PP2A. Phosphorylated by PKA.

The protein localises to the cytoplasm. Its function is as follows. Protein phosphatase inhibitor that specifically inhibits protein phosphatase 2A (PP2A) during mitosis. Inhibition of PP2A is enhanced when ARPP19 is phosphorylated. When phosphorylated at Ser-62 during mitosis, specifically interacts with PPP2R2D (PR55-delta) and inhibits its activity, leading to inactivation of PP2A, an essential condition to keep cyclin-B1-CDK1 activity high during M phase. May indirectly enhance GAP-43 expression. The protein is cAMP-regulated phosphoprotein 19 (ARPP19) of Homo sapiens (Human).